The primary structure comprises 529 residues: Bifunctional purine biosynthesis protein PurH (529 aa).

The 148-residue stretch at 1–148 (MQQRRPIRRA…KNHKDVAIVV (148 aa)) folds into the MGS-like domain.

It belongs to the PurH family.

It catalyses the reaction (6R)-10-formyltetrahydrofolate + 5-amino-1-(5-phospho-beta-D-ribosyl)imidazole-4-carboxamide = 5-formamido-1-(5-phospho-D-ribosyl)imidazole-4-carboxamide + (6S)-5,6,7,8-tetrahydrofolate. The catalysed reaction is IMP + H2O = 5-formamido-1-(5-phospho-D-ribosyl)imidazole-4-carboxamide. Its pathway is purine metabolism; IMP biosynthesis via de novo pathway; 5-formamido-1-(5-phospho-D-ribosyl)imidazole-4-carboxamide from 5-amino-1-(5-phospho-D-ribosyl)imidazole-4-carboxamide (10-formyl THF route): step 1/1. It participates in purine metabolism; IMP biosynthesis via de novo pathway; IMP from 5-formamido-1-(5-phospho-D-ribosyl)imidazole-4-carboxamide: step 1/1. The protein is Bifunctional purine biosynthesis protein PurH of Yersinia enterocolitica serotype O:8 / biotype 1B (strain NCTC 13174 / 8081).